The primary structure comprises 199 residues: Superoxide dismutase [Mn/Fe] (199 aa).

His27, His81, Asp161, and His165 together coordinate Fe(3+). Mn(2+)-binding residues include His27, His81, Asp161, and His165.

This sequence belongs to the iron/manganese superoxide dismutase family. As to quaternary structure, homodimer. Mn(2+) is required as a cofactor. The cofactor is Fe(3+).

The enzyme catalyses 2 superoxide + 2 H(+) = H2O2 + O2. Functionally, destroys superoxide anion radicals which are normally produced within the cells and which are toxic to biological systems. Catalyzes the dismutation of superoxide anion radicals into O2 and H2O2 by successive reduction and oxidation of the transition metal ion at the active site. In Staphylococcus haemolyticus (strain JCSC1435), this protein is Superoxide dismutase [Mn/Fe] (sodA).